The following is a 68-amino-acid chain: MGSFSIWHWLIVLAVVLLLFGRGKIPELMGDVAKGIKNFKKGMGDDEVASADKSVDGKTVDHKSDEVR.

A helical membrane pass occupies residues 1-21 (MGSFSIWHWLIVLAVVLLLFG). Residues 42–68 (GMGDDEVASADKSVDGKTVDHKSDEVR) are disordered. Basic and acidic residues predominate over residues 53–68 (KSVDGKTVDHKSDEVR).

It belongs to the TatA/E family. The Tat system comprises two distinct complexes: a TatABC complex, containing multiple copies of TatA, TatB and TatC subunits, and a separate TatA complex, containing only TatA subunits. Substrates initially bind to the TatABC complex, which probably triggers association of the separate TatA complex to form the active translocon.

The protein resides in the cell inner membrane. In terms of biological role, part of the twin-arginine translocation (Tat) system that transports large folded proteins containing a characteristic twin-arginine motif in their signal peptide across membranes. TatA could form the protein-conducting channel of the Tat system. The sequence is that of Sec-independent protein translocase protein TatA from Rhizobium meliloti (strain 1021) (Ensifer meliloti).